A 126-amino-acid chain; its full sequence is MRHYEIVFMVHPDQSEQVPGMIERYTGSVKEAGGQIHRLEDWGRRQLAYPINKLHKAHYVLMNVEAPQEVIDELETTFRYNDAVLRNVIIRTKHAVTEASPMAKAKDERKVAVAEVETNNFEDAEE.

It belongs to the bacterial ribosomal protein bS6 family.

In terms of biological role, binds together with bS18 to 16S ribosomal RNA. This Actinobacillus succinogenes (strain ATCC 55618 / DSM 22257 / CCUG 43843 / 130Z) protein is Small ribosomal subunit protein bS6.